The primary structure comprises 309 residues: Protein-L-isoaspartate O-methyltransferase (309 aa).

Residues 1-46 are disordered; it reads MSGERAKRFPLALEDLKRAPRKSDGRAGERHAAIAAPKAADKPAAV. Residues 14 to 32 are compositionally biased toward basic and acidic residues; it reads EDLKRAPRKSDGRAGERHA. Residues 33–46 show a composition bias toward low complexity; it reads AIAAPKAADKPAAV. Residue Ser-156 is part of the active site.

Belongs to the methyltransferase superfamily. L-isoaspartyl/D-aspartyl protein methyltransferase family.

The protein resides in the cytoplasm. The enzyme catalyses [protein]-L-isoaspartate + S-adenosyl-L-methionine = [protein]-L-isoaspartate alpha-methyl ester + S-adenosyl-L-homocysteine. Functionally, catalyzes the methyl esterification of L-isoaspartyl residues in peptides and proteins that result from spontaneous decomposition of normal L-aspartyl and L-asparaginyl residues. It plays a role in the repair and/or degradation of damaged proteins. This chain is Protein-L-isoaspartate O-methyltransferase, found in Burkholderia vietnamiensis (strain G4 / LMG 22486) (Burkholderia cepacia (strain R1808)).